A 701-amino-acid chain; its full sequence is C6 finger domain transcription factor nscR (701 aa).

The zn(2)-C6 fungal-type DNA-binding region spans 17–43; it reads CELCRERKVKCDKLDPCTNCASAGVVC.

The protein localises to the nucleus. Functionally, transcription factor that specifically regulates the neosartoricin B biosynthesis gene cluster. The polypeptide is C6 finger domain transcription factor nscR (Arthroderma gypseum (strain ATCC MYA-4604 / CBS 118893) (Microsporum gypseum)).